A 591-amino-acid polypeptide reads, in one-letter code: Transcriptional regulator PUL4 (591 aa).

Residues C3 to C29 constitute a DNA-binding region (zn(2)-C6 fungal-type).

The protein localises to the nucleus. Its function is as follows. Transcription factor involved in regulation of the PUL gene cluster that mediates the formation of pulcherrimin, a red iron-containing pigment composed of two cyclized and modified leucine molecules that acts as a siderophore, a chelator that binds iron outside the cell for subsequent uptake. In Kluyveromyces lactis (strain ATCC 8585 / CBS 2359 / DSM 70799 / NBRC 1267 / NRRL Y-1140 / WM37) (Yeast), this protein is Transcriptional regulator PUL4.